The sequence spans 240 residues: Uridylate kinase (240 aa).

13 to 16 (KISG) is a binding site for ATP. A UMP-binding site is contributed by G55. ATP is bound by residues G56 and R60. UMP-binding positions include D75 and 136 to 143 (TGNPFFTT). Positions 163, 164, 169, and 172 each coordinate ATP.

This sequence belongs to the UMP kinase family. In terms of assembly, homohexamer.

The protein resides in the cytoplasm. The enzyme catalyses UMP + ATP = UDP + ADP. The protein operates within pyrimidine metabolism; CTP biosynthesis via de novo pathway; UDP from UMP (UMPK route): step 1/1. With respect to regulation, inhibited by UTP. In terms of biological role, catalyzes the reversible phosphorylation of UMP to UDP. The protein is Uridylate kinase of Paramagnetospirillum magneticum (strain ATCC 700264 / AMB-1) (Magnetospirillum magneticum).